Consider the following 263-residue polypeptide: Uracil-DNA glycosylase (263 aa).

Catalysis depends on aspartate 94, which acts as the Proton acceptor.

The protein belongs to the uracil-DNA glycosylase (UDG) superfamily. UNG family.

Its subcellular location is the cytoplasm. The catalysed reaction is Hydrolyzes single-stranded DNA or mismatched double-stranded DNA and polynucleotides, releasing free uracil.. Its function is as follows. Excises uracil residues from the DNA which can arise as a result of misincorporation of dUMP residues by DNA polymerase or due to deamination of cytosine. The chain is Uracil-DNA glycosylase from Ralstonia pickettii (strain 12J).